Here is a 57-residue protein sequence, read N- to C-terminus: uncharacterized protein (57 aa).

2 helical membrane passes run 4 to 26 and 33 to 55; these read VNIL…SELW and ALGY…IAIL.

The protein resides in the cell membrane. This is an uncharacterized protein from Methanocaldococcus jannaschii (strain ATCC 43067 / DSM 2661 / JAL-1 / JCM 10045 / NBRC 100440) (Methanococcus jannaschii).